Consider the following 174-residue polypeptide: Co-chaperone protein HscB (174 aa).

The J domain occupies 2-74 (NYFALFDLPR…LNRAIYFLCL (73 aa)).

It belongs to the HscB family. Interacts with HscA and stimulates its ATPase activity. Interacts with IscU.

Functionally, co-chaperone involved in the maturation of iron-sulfur cluster-containing proteins. Seems to help targeting proteins to be folded toward HscA. The protein is Co-chaperone protein HscB of Buchnera aphidicola subsp. Acyrthosiphon pisum (strain 5A).